The chain runs to 751 residues: MHTDIIIGDQFAANNNYWVMQSPELDYRHELMGRLHKIEPADVELEVLAAAAAAANNNNNTSSNNNHSSNSSSNNSNGSQTPNGNNNSSLATGGHQHHQFHHHLHHHHSHQHHHQHHHLHQHHSHSLQSGESGASEAWPHLPAPSYASDVPHAQQQQLQPAGSPNSNSNGAYGCAPLYDGAPYEVALGYGGAVVASTGGATSSDKEYLYETKNKEALYADPLDDPYQRPVLWDDITTSIQNIDPENALMLSSSGSSNNNGSSNSSSNTGESATSQLPQVKMEAIDESLLETFSTPLLSPLEIKTEKQQRQQQHQHQQQQQQQQQQQQQHQQQHQQQYQQQHYQQHYQQQHLYQHHPSLALPGLPPAVDVVELQLQQQHQQQQHLQHNNSSSSSPKLATPGDNSGNTSSYQQQYASQLVSGSGGGYLNGSSSNSYGYSWHSSQSFHTKYQIHPPSAAASATASATATPTAQLGAQQQQQQQQQQQLQQLCPPAAPSTPSTSSSSISSSSASSASRHMFVPPLTPPSSDPGSPGSSMVAAAAAAAAQRRTTPPPPYQQGHVMGLINPPPTLQLLGGAATGSNNSCTTTLTTLTPASAIQQQQQQPQQQQVPQQQPPPTPRSSGGGRRGRHSHHQPGTAAHIASLMSVRTVRYNRRNNPELEKRRIHHCDFVGCSKVYTKSSHLKAHQRIHTGEKPYTCQWPECEWRFARSDELTRHYRKHTGAKPFKCIVCERSFARSDHLALHMKRHLPKNK.

The span at 57–89 shows a compositional bias: low complexity; sequence NNNNTSSNNNHSSNSSSNNSNGSQTPNGNNNSS. 6 disordered regions span residues 57 to 167, 248 to 275, 304 to 351, 374 to 410, 458 to 578, and 594 to 639; these read NNNN…PNSN, LMLS…ATSQ, TEKQ…QQHL, LQQQ…SSYQ, SATA…AATG, and SAIQ…AAHI. Residues 95 to 125 show a composition bias toward basic residues; that stretch reads HQHHQFHHHLHHHHSHQHHHQHHHLHQHHSH. Polar residues predominate over residues 153–167; the sequence is AQQQQLQPAGSPNSN. Low complexity-rich tracts occupy residues 251-267, 309-351, and 374-393; these read SSSG…SSSN, RQQQ…QQHL, and LQQQ…SSSS. A compositionally biased stretch (polar residues) spans 400–410; it reads GDNSGNTSSYQ. Composition is skewed to low complexity over residues 458-513, 527-548, and 594-610; these read SATA…SSAS, DPGS…QRRT, and SAIQ…QVPQ. 3 C2H2-type zinc fingers span residues 664–688, 694–718, and 724–746; these read HHCD…QRIH, YTCQ…YRKH, and FKCI…MKRH.

Belongs to the krueppel C2H2-type zinc-finger protein family. Highly enriched in the peripheral nervous system but is absent from the central nervous system. Expressed in neurons with more than one dendrite including da neurons, bd neurons and the dmd1 neuron but undetectable in neurons with single dendrites such as external sensory organ neurons and chodonotal neurons.

The protein localises to the nucleus. Functionally, transcriptional regulator which promotes dendrite growth by suppressing, either directly or indirectly, the expression of the microtubule-severing protein spas. Determines multipolar neuron morphology in postmitotic neurons by positively regulating the expression of genes involved in nuclear positioning including several dynein genes and the nuclear migration protein nudC. The protein is Dendritic arbor reduction protein 1 of Drosophila melanogaster (Fruit fly).